A 364-amino-acid polypeptide reads, in one-letter code: Histidinol-phosphate aminotransferase 1 (364 aa).

The residue at position 211 (Lys-211) is an N6-(pyridoxal phosphate)lysine.

This sequence belongs to the class-II pyridoxal-phosphate-dependent aminotransferase family. Histidinol-phosphate aminotransferase subfamily. In terms of assembly, homodimer. Pyridoxal 5'-phosphate is required as a cofactor.

It carries out the reaction L-histidinol phosphate + 2-oxoglutarate = 3-(imidazol-4-yl)-2-oxopropyl phosphate + L-glutamate. It functions in the pathway amino-acid biosynthesis; L-histidine biosynthesis; L-histidine from 5-phospho-alpha-D-ribose 1-diphosphate: step 7/9. This Legionella pneumophila (strain Paris) protein is Histidinol-phosphate aminotransferase 1.